The following is a 212-amino-acid chain: Peptide methionine sulfoxide reductase MsrA (212 aa).

Residue Cys51 is part of the active site.

It belongs to the MsrA Met sulfoxide reductase family.

It catalyses the reaction L-methionyl-[protein] + [thioredoxin]-disulfide + H2O = L-methionyl-(S)-S-oxide-[protein] + [thioredoxin]-dithiol. The catalysed reaction is [thioredoxin]-disulfide + L-methionine + H2O = L-methionine (S)-S-oxide + [thioredoxin]-dithiol. Has an important function as a repair enzyme for proteins that have been inactivated by oxidation. Catalyzes the reversible oxidation-reduction of methionine sulfoxide in proteins to methionine. The polypeptide is Peptide methionine sulfoxide reductase MsrA (Vibrio cholerae serotype O1 (strain ATCC 39541 / Classical Ogawa 395 / O395)).